The primary structure comprises 177 residues: ADP-ribosylation factor-like protein 3 (177 aa).

Gly-2 carries N-myristoyl glycine lipidation. GTP contacts are provided by residues 23–31 (GLDNAGKTT), 125–128 (NKQD), and Ala-159.

Belongs to the small GTPase superfamily. Arf family.

It localises to the golgi apparatus membrane. Its subcellular location is the cytoplasm. The protein resides in the cytoskeleton. It is found in the spindle. The protein localises to the nucleus. It localises to the microtubule organizing center. Functionally, small GTP-binding protein which cycles between an inactive GDP-bound and an active GTP-bound form, and the rate of cycling is regulated by guanine nucleotide exchange factors (GEF) and GTPase-activating proteins (GAP). Required for normal cytokinesis and cilia signaling. Required for targeting proteins to the ciliary membrane by releasing myristoylated protein from unc119 cargo adapters into the cilium. This chain is ADP-ribosylation factor-like protein 3, found in Chlamydomonas reinhardtii (Chlamydomonas smithii).